Consider the following 321-residue polypeptide: uncharacterized protein (321 aa).

9 helical membrane-spanning segments follow: residues 12 to 32 (IGVE…WAAT), 52 to 72 (LITS…AFLV), 86 to 106 (ILMS…ILII), 109 to 129 (LTGL…QQWF), 136 to 156 (FVIS…LVLA), 168 to 188 (DSLS…LFVG), 214 to 234 (WGMI…FTFL), 254 to 274 (KEIP…GLFF), and 292 to 312 (IFIC…QIFA).

It localises to the cell membrane. This is an uncharacterized protein from Campylobacter jejuni subsp. jejuni serotype O:2 (strain ATCC 700819 / NCTC 11168).